A 473-amino-acid chain; its full sequence is Trigger factor (473 aa).

Residues 171-256 (GDRVTIDFVG…VTKIQAAGEA (86 aa)) form the PPIase FKBP-type domain. Residues 439–473 (KEALFADEDGDDTTGGKPADKAEAKDESKTEAKAD) form a disordered region. Over residues 456 to 473 (PADKAEAKDESKTEAKAD) the composition is skewed to basic and acidic residues.

This sequence belongs to the FKBP-type PPIase family. Tig subfamily.

The protein localises to the cytoplasm. It catalyses the reaction [protein]-peptidylproline (omega=180) = [protein]-peptidylproline (omega=0). Involved in protein export. Acts as a chaperone by maintaining the newly synthesized protein in an open conformation. Functions as a peptidyl-prolyl cis-trans isomerase. The protein is Trigger factor of Methylobacterium radiotolerans (strain ATCC 27329 / DSM 1819 / JCM 2831 / NBRC 15690 / NCIMB 10815 / 0-1).